The sequence spans 169 residues: uncharacterized protein (169 aa).

2 consecutive transmembrane segments (helical) span residues 10–30 (NVHM…FKLI) and 149–169 (IPLA…LLIP).

It is found in the membrane. This is an uncharacterized protein from Dictyostelium discoideum (Social amoeba).